The chain runs to 173 residues: Nicotinamide-nucleotide adenylyltransferase (173 aa).

The protein belongs to the archaeal NMN adenylyltransferase family.

The protein resides in the cytoplasm. It carries out the reaction beta-nicotinamide D-ribonucleotide + ATP + H(+) = diphosphate + NAD(+). Its pathway is cofactor biosynthesis; NAD(+) biosynthesis; NAD(+) from nicotinamide D-ribonucleotide: step 1/1. The sequence is that of Nicotinamide-nucleotide adenylyltransferase from Methanosarcina mazei (strain ATCC BAA-159 / DSM 3647 / Goe1 / Go1 / JCM 11833 / OCM 88) (Methanosarcina frisia).